A 498-amino-acid polypeptide reads, in one-letter code: MRINPTTSGSEVSTLEKKKPGRVIQIIGPVLDVAFPPGKMPNIYNALVVQDRDSVGQPINVACEVQQLLGNNRVRAVAMSATDGLTRGMEVIDTGAPISVPVGGATLGRIFNVLGEPVDNLGPVDTNTTSPIHRSAPAFIQLDTKLSIFETGIKVVDLLAPYRRGGKIGLFGGAGVGKTVLIMELINNIAKAHGGVSVFGGVGERTREGNDLYMEMKESGVINEENIAESKVALVYGQMNEPPGARMRVGLTALTMAEYFRDVNEQDVLLFIDNIFRFVQAGSEVSALLGRMPSAVGYQPTLSTEMGSLQERITSTKEGSITSIQAVYVPADDLTDPAPATTFAHLDATTVLSRGLAAKGIYPAVDPLDSTSTMLQPRIVGEEHYETAQRVKQTLQRYKELQDIIAILGLDELSEEDRLLVARARKIERFLSQPFFVAEVFTGSPGKYVGLAETIRGFQLILSGELDGLPEQAFYLVGNIDEATAKAMNLEMESNLKK.

An ATP-binding site is contributed by 172–179 (GGAGVGKT).

The protein belongs to the ATPase alpha/beta chains family. F-type ATPases have 2 components, CF(1) - the catalytic core - and CF(0) - the membrane proton channel. CF(1) has five subunits: alpha(3), beta(3), gamma(1), delta(1), epsilon(1). CF(0) has four main subunits: a(1), b(1), b'(1) and c(9-12).

It is found in the plastid. It localises to the chloroplast thylakoid membrane. It carries out the reaction ATP + H2O + 4 H(+)(in) = ADP + phosphate + 5 H(+)(out). Its function is as follows. Produces ATP from ADP in the presence of a proton gradient across the membrane. The catalytic sites are hosted primarily by the beta subunits. In Nicotiana tomentosiformis (Tobacco), this protein is ATP synthase subunit beta, chloroplastic.